The sequence spans 185 residues: Ribosome-recycling factor (185 aa).

This sequence belongs to the RRF family.

The protein resides in the cytoplasm. Responsible for the release of ribosomes from messenger RNA at the termination of protein biosynthesis. May increase the efficiency of translation by recycling ribosomes from one round of translation to another. The chain is Ribosome-recycling factor from Pseudomonas syringae pv. tomato (strain ATCC BAA-871 / DC3000).